The chain runs to 3914 residues: Trichosetin synthetase PKS-NRPS1 (3914 aa).

The Ketosynthase family 3 (KS3) domain occupies 4 to 420; sequence NEPIAIIGSA…GTNAHAIIEA (417 aa). Catalysis depends on for beta-ketoacyl synthase activity residues Cys-177, His-301, and His-340. Residues 525 to 847 are malonyl-CoA:ACP transacylase (MAT) domain; that stretch reads VLTGQGAQWP…REKDDIQQFA (323 aa). An N-terminal hotdog fold region spans residues 913–1047; the sequence is HPILGRRCHD…AHVKASLSVP (135 aa). Residues 913–1214 are dehydratase (DH) domain; it reads HPILGRRCHD…MELVPFSPAT (302 aa). Residues 913–1216 form the PKS/mFAS DH domain; it reads HPILGRRCHD…LVPFSPATPE (304 aa). The active-site Proton acceptor; for dehydratase activity is the His-946. A C-terminal hotdog fold region spans residues 1062-1216; sequence LRKVEVDRFY…LVPFSPATPE (155 aa). Asp-1122 (proton donor; for dehydratase activity) is an active-site residue. The interval 1364–1593 is methyltransferase (MT) domain; it reads EGFGLDLVNK…DLPETKSTEL (230 aa). The ketoreductase (KR) domain stretch occupies residues 2083–2255; the sequence is TFLLIGLSGE…VAASSIDISS (173 aa). In terms of domain architecture, Carrier 1 spans 2356–2436; the sequence is LADVKTKADA…DLIEESLNLI (81 aa). An O-(pantetheine 4'-phosphoryl)serine modification is found at Ser-2396. Positions 2447 to 2518 are disordered; that stretch reads EAGSTPTTQP…DSTDNSTPLK (72 aa). The segment covering 2481–2500 has biased composition (polar residues); that stretch reads QQTGSDSSRSPIDTPLTSME. The segment at 2529-2956 is condensation (C) domain; the sequence is SYGQAGFWFL…VQGTNKAADT (428 aa). Residues 2991–3388 form an adenylation (A) (KR) domain region; sequence QTIQANSTKV…LLFCDGRLED (398 aa). A Carrier 2 domain is found at 3502-3579; sequence GTLTVAEQRL…TMAVVLESCG (78 aa). Ser-3539 bears the O-(pantetheine 4'-phosphoryl)serine mark. The tract at residues 3615-3831 is reductase (RED) domain; that stretch reads LTGSAGYLGR…VLPTGDIVKA (217 aa).

It in the C-terminal section; belongs to the NRP synthetase family.

The catalysed reaction is L-serine + 7 malonyl-CoA + acetyl-CoA + 2 S-adenosyl-L-methionine + ATP + 8 NADPH + 11 H(+) = (5S)-3-[(2E,6R,8E,10E,12E)-2,6-dimethyltetradeca-2,8,10,12-tetraenoyl]-5-(hydroxymethyl)pyrrolidine-2,4-dione + AMP + 2 S-adenosyl-L-homocysteine + 7 CO2 + diphosphate + 8 NADP(+) + 8 CoA + 6 H2O. It functions in the pathway mycotoxin biosynthesis. Hybrid PKS-NRPS synthetase; part of the gene cluster that mediates the biosynthesis of trichosetin, a trans-fused decalin-containing tetramic acid with antimicrobial activity. The PKS module of PKS-NRPS1 together with the enoylreductase (ER) catalyze the formation of the polyketide unit which is then conjugated to L-serine by the condensation domain of the PKS-NRPS1 NRPS module. Activity of the Dieckmann cyclase domain (RED) results in release of the Dieckmann product intermediate. Diels-Alderase (DA) is involved in endo-selective Diels-Alder cycloaddition to form the decalin ring, leading to the production of N-desmethylequisetin also called trichosetin. The cluster does not contain the equisetin N-methyltransferase and consequently, trichosetin is isolated as final product. The protein is Trichosetin synthetase PKS-NRPS1 of Gibberella fujikuroi (strain CBS 195.34 / IMI 58289 / NRRL A-6831) (Bakanae and foot rot disease fungus).